The sequence spans 565 residues: Thiol:disulfide interchange protein DsbD (565 aa).

The first 19 residues, methionine 1–alanine 19, serve as a signal peptide directing secretion. Disulfide bonds link cysteine 122–cysteine 128 and cysteine 182–cysteine 304. 7 consecutive transmembrane segments (helical) span residues leucine 163–valine 183, leucine 208–valine 228, tyrosine 243–phenylalanine 263, glycine 289–leucine 309, tryptophan 323–isoleucine 343, tryptophan 357–leucine 377, and isoleucine 384–threonine 404. Positions tryptophan 434 to proline 565 constitute a Thioredoxin domain. Cysteines 480 and 483 form a disulfide.

It belongs to the thioredoxin family. DsbD subfamily.

It is found in the cell inner membrane. It catalyses the reaction [protein]-dithiol + NAD(+) = [protein]-disulfide + NADH + H(+). The enzyme catalyses [protein]-dithiol + NADP(+) = [protein]-disulfide + NADPH + H(+). Required to facilitate the formation of correct disulfide bonds in some periplasmic proteins and for the assembly of the periplasmic c-type cytochromes. Acts by transferring electrons from cytoplasmic thioredoxin to the periplasm. This transfer involves a cascade of disulfide bond formation and reduction steps. This Escherichia coli O6:H1 (strain CFT073 / ATCC 700928 / UPEC) protein is Thiol:disulfide interchange protein DsbD.